We begin with the raw amino-acid sequence, 1116 residues long: Protein translocase subunit SecA (1116 aa).

ATP is bound by residues Gln-176, 194 to 198 (GEGKT), and Asp-693.

Belongs to the SecA family. As to quaternary structure, monomer and homodimer. Part of the essential Sec protein translocation apparatus which comprises SecA, SecYEG and auxiliary proteins SecDF. Other proteins may also be involved.

The protein resides in the cell inner membrane. The protein localises to the cytoplasm. It catalyses the reaction ATP + H2O + cellular proteinSide 1 = ADP + phosphate + cellular proteinSide 2.. Functionally, part of the Sec protein translocase complex. Interacts with the SecYEG preprotein conducting channel. Has a central role in coupling the hydrolysis of ATP to the transfer of proteins into and across the cell membrane, serving as an ATP-driven molecular motor driving the stepwise translocation of polypeptide chains across the membrane. The protein is Protein translocase subunit SecA of Amoebophilus asiaticus (strain 5a2).